The primary structure comprises 246 residues: MAGHSKWANTRHRKAAQDAKRGKIFTKIIRELVTAAKLGGGDPDANPRLRAAIDKALSNNMTRDTLNRAIARGVGGDDDANMETIIYEGYGPGGTAIMIECLSDNRNRTVAEVRHAFSKCGGNLGTDGSVAYLFSKKGVISFEKGDEDTIMEAALEAGAEDVVTYDDGAIDVYTAWEEMGKVRDALEAAGLKADSAEVSMIPSTKADMDAETAPKLMRLIDMLEDCDDVQEVYHNGEISDEVAATL.

The segment at Met1–Lys20 is disordered.

Belongs to the TACO1 family.

It is found in the cytoplasm. The polypeptide is Probable transcriptional regulatory protein YebC (Escherichia coli O6:K15:H31 (strain 536 / UPEC)).